The primary structure comprises 941 residues: Cell wall protein IFF9 (941 aa).

The first 20 residues, 1-20 (MQLFQNILVSIALLTQIVFA), serve as a signal peptide directing secretion. N917 carries the GPI-anchor amidated asparagine lipid modification. Residues 918-941 (GSNKESIENIKYLALVVFGLMMFM) constitute a propeptide, removed in mature form.

It belongs to the HYR1/IFF family. In terms of processing, the GPI-anchor is attached to the protein in the endoplasmic reticulum and serves to target the protein to the cell surface. There, the glucosamine-inositol phospholipid moiety is cleaved off and the GPI-modified mannoprotein is covalently attached via its lipidless GPI glycan remnant to the 1,6-beta-glucan of the outer cell wall layer.

It localises to the secreted. The protein localises to the cell wall. It is found in the membrane. In terms of biological role, GPI-anchored cell wall protein involved in cell wall organization, hyphal growth, as well as in host-fungal interaction and virulence. This chain is Cell wall protein IFF9 (IFF9), found in Candida albicans (strain SC5314 / ATCC MYA-2876) (Yeast).